The primary structure comprises 247 residues: Phycobilisome rod-core linker polypeptide CpcG2 (247 aa).

Positions 11–189 (SSQNQRVPGY…YWRDKLESER (179 aa)) constitute a PBS-linker domain. A disordered region spans residues 223–247 (PDTTRNTTPTGIPISVNPSANFPVR).

This sequence belongs to the phycobilisome linker protein family. In terms of assembly, part of the phycobilisome, a hemidiscoidal structure that is composed of two distinct substructures: a core complex and a number of rods radiating from the core.

It localises to the cellular thylakoid membrane. Its function is as follows. Rod-core linker protein required for attachment of phycocyanin to allophycocyanin in cores of phycobilisomes. Linker polypeptides determine the state of aggregation and the location of the disk-shaped phycobiliprotein units within the phycobilisome and modulate their spectroscopic properties in order to mediate a directed and optimal energy transfer. In Nostoc sp. (strain PCC 7120 / SAG 25.82 / UTEX 2576), this protein is Phycobilisome rod-core linker polypeptide CpcG2.